The sequence spans 146 residues: VHLTAEEKAAVTALWGKVNVDEVGGEALGRLLVVYPWTQRFFDSFGDLSSPDAVMGNPKVKAHGKKVLNSFSEGLKNLDNLKGTFAKLSELHCDKLHVDPENFKLLGNVLVCVLAHHFGKEFTPQVQAAYQKVVAGVANALAHKYH.

Val-1 carries the post-translational modification N-acetylvaline. Residues His-2–His-146 enclose the Globin domain. Position 12 is a phosphothreonine (Thr-12). Ser-44 is subject to Phosphoserine. Residue Lys-59 is modified to N6-acetyllysine. His-63 lines the heme b pocket. Lys-82 is subject to N6-acetyllysine. Position 92 (His-92) interacts with heme b. Residue Cys-93 is modified to S-nitrosocysteine. Lys-144 bears the N6-acetyllysine mark.

This sequence belongs to the globin family. In terms of assembly, heterotetramer of two alpha chains and two beta chains. Red blood cells.

Its function is as follows. Involved in oxygen transport from the lung to the various peripheral tissues. The polypeptide is Hemoglobin subunit beta (HBB) (Mellivora capensis (Ratel)).